A 474-amino-acid polypeptide reads, in one-letter code: Nitrogenase vanadium-iron protein alpha chain (474 aa).

Cysteine 49, cysteine 75, and cysteine 138 together coordinate [8Fe-7S] cluster. Residues cysteine 257 and histidine 423 each contribute to the [7Fe-V-9S-C-homocitryl] cluster site.

The protein belongs to the NifD/NifK/NifE/NifN family. As to quaternary structure, hexamer of two alpha, two beta, and two delta chains. Requires [8Fe-7S] cluster as cofactor. [7Fe-V-9S-C-homocitryl] cluster serves as cofactor.

The catalysed reaction is N2 + 8 reduced [2Fe-2S]-[ferredoxin] + 16 ATP + 16 H2O = H2 + 8 oxidized [2Fe-2S]-[ferredoxin] + 2 NH4(+) + 16 ADP + 16 phosphate + 6 H(+). Functionally, this vanadium-iron protein is part of the nitrogenase complex that catalyzes the key enzymatic reactions in nitrogen fixation. This chain is Nitrogenase vanadium-iron protein alpha chain (vnfD), found in Azotobacter vinelandii.